Here is a 123-residue protein sequence, read N- to C-terminus: Neuropeptide-like peptides nlp-40 (123 aa).

Residues 1 to 17 (MKLVILLSFVATVAVFA) form the signal peptide. 3 consecutive propeptides follow at residues 30-31 (RA), 66-67 (KR), and 75-76 (KR).

In terms of tissue distribution, expressed in intestinal cells.

Its subcellular location is the secreted. The protein resides in the cytoplasmic vesicle. Functionally, neuropeptide ligand for the G-protein coupled receptor aex-2. Activates and regulates the rhythmic calcium influx in DVB GABergic neurons during the defecation motor program, which is a coordinated series of three muscle contractions that occurs every 45 seconds. This Caenorhabditis elegans protein is Neuropeptide-like peptides nlp-40.